Here is an 817-residue protein sequence, read N- to C-terminus: tRNA(Met) cytidine acetyltransferase TmcA (817 aa).

Residues Gln265, 289 to 298 (GRGKSVSVGI), and Arg439 each bind ATP. An N-acetyltransferase domain is found at 469-664 (ELIRKMEVYL…YTAIVIKPIS (196 aa)). Acetyl-CoA contacts are provided by residues 589–591 (IAT), 596–602 (MDLGLGS), Glu629, and Arg636.

Belongs to the RNA cytidine acetyltransferase family. TmcA subfamily.

Its subcellular location is the cytoplasm. It carries out the reaction cytidine(34) in elongator tRNA(Met) + acetyl-CoA + ATP + H2O = N(4)-acetylcytidine(34) in elongator tRNA(Met) + ADP + phosphate + CoA + H(+). The enzyme catalyses a cytidine in RNA + acetyl-CoA + ATP + H2O = an N(4)-acetylcytidine in RNA + ADP + phosphate + CoA + H(+). The catalysed reaction is a cytidine in tRNA + acetyl-CoA + ATP + H2O = an N(4)-acetylcytidine in tRNA + ADP + phosphate + CoA + H(+). It catalyses the reaction a cytidine in mRNA + acetyl-CoA + ATP + H2O = an N(4)-acetylcytidine in mRNA + ADP + phosphate + CoA + H(+). In terms of biological role, catalyzes the formation of N(4)-acetylcytidine (ac(4)C) at the wobble position of tRNA(Met), by using acetyl-CoA as an acetyl donor and ATP (or GTP). Catalyzes the formation of N(4)-acetylcytidine (ac(4)C) sites in rRNA, tRNA, mRNA and non-coding (nc) RNA, almost always on the middle C of a CCG motif. In hyperthermophiles more acetylation is seen at higher temperatures. The polypeptide is tRNA(Met) cytidine acetyltransferase TmcA (Pyrococcus abyssi (strain GE5 / Orsay)).